Here is a 495-residue protein sequence, read N- to C-terminus: Sulfhydryl oxidase 2 (495 aa).

An N-terminal signal peptide occupies residues 1–15 (MSLVHLLLFAGLVIA). One can recognise a Thioredoxin domain in the interval 29–164 (EISDQKDKAV…LLNWINKQIG (136 aa)). N-linked (GlcNAc...) asparagine glycosylation occurs at Asn-41. Active-site nucleophile residues include Cys-66 and Cys-69. Residues Cys-66 and Cys-69 are joined by a disulfide bond. Asn-182, Asn-257, Asn-266, and Asn-292 each carry an N-linked (GlcNAc...) asparagine glycan. The cysteines at positions 287 and 299 are disulfide-linked. The ERV/ALR sulfhydryl oxidase domain maps to 290–392 (SKNDTRGFSC…GDPKFPKIIW (103 aa)). Residues Arg-295, Trp-302, His-306, Glu-336, His-340, 363–370 (WSTHNKVN), Lys-389, and Trp-392 each bind FAD. Cysteines 334 and 337 form a disulfide. A disulfide bond links Cys-398 and Cys-401.

The cofactor is FAD.

The protein localises to the secreted. It carries out the reaction 2 R'C(R)SH + O2 = R'C(R)S-S(R)CR' + H2O2. In terms of biological role, catalyzes the oxidation of sulfhydryl groups in peptide and protein thiols to disulfides with the reduction of oxygen to hydrogen peroxide. May contribute to disulfide bond formation in a variety of secreted proteins. This is Sulfhydryl oxidase 2 (QSOX2) from Arabidopsis thaliana (Mouse-ear cress).